The primary structure comprises 617 residues: V-type proton ATPase catalytic subunit A (617 aa).

An ATP-binding site is contributed by 257–264 (GAFGCGKT).

The protein belongs to the ATPase alpha/beta chains family. V-ATPase is a heteromultimeric enzyme composed of a peripheral catalytic V1 complex (components A to H) attached to an integral membrane V0 proton pore complex (components: a, c, c', c'', d, e, f and VOA1). In terms of processing, is a probable target for sumoylation.

Its subcellular location is the vacuole membrane. It catalyses the reaction ATP + H2O + 4 H(+)(in) = ADP + phosphate + 5 H(+)(out). Catalytic subunit of the V1 complex of vacuolar(H+)-ATPase (V-ATPase), a multisubunit enzyme composed of a peripheral complex (V1) that hydrolyzes ATP and a membrane integral complex (V0) that translocates protons. V-ATPase is responsible for acidifying and maintaining the pH of intracellular compartments. Mediates oxidative stress response, filamentous growth, and plays an important role in virulence. The protein is V-type proton ATPase catalytic subunit A of Candida albicans (strain SC5314 / ATCC MYA-2876) (Yeast).